The primary structure comprises 82 residues: Histidine-rich protein (82 aa).

The sequence is that of Histidine-rich protein from Plasmodium falciparum (isolate fcm17 / Senegal).